The sequence spans 224 residues: UPF0758 protein Pmen_4376 (224 aa).

The MPN domain maps to 102–224 (ALESPQAVRD…PLSMAELGWM (123 aa)). Positions 173, 175, and 186 each coordinate Zn(2+). The JAMM motif motif lies at 173 to 186 (HNHPSGVCEPSQAD).

Belongs to the UPF0758 family.

This chain is UPF0758 protein Pmen_4376, found in Ectopseudomonas mendocina (strain ymp) (Pseudomonas mendocina).